The sequence spans 317 residues: Beta-ketoacyl-[acyl-carrier-protein] synthase III (317 aa).

Catalysis depends on residues Cys-112 and His-244. Residues Gln-245–Arg-249 form an ACP-binding region. Asn-274 is an active-site residue.

It belongs to the thiolase-like superfamily. FabH family. As to quaternary structure, homodimer.

The protein localises to the cytoplasm. It catalyses the reaction malonyl-[ACP] + acetyl-CoA + H(+) = 3-oxobutanoyl-[ACP] + CO2 + CoA. It participates in lipid metabolism; fatty acid biosynthesis. Its function is as follows. Catalyzes the condensation reaction of fatty acid synthesis by the addition to an acyl acceptor of two carbons from malonyl-ACP. Catalyzes the first condensation reaction which initiates fatty acid synthesis and may therefore play a role in governing the total rate of fatty acid production. Possesses both acetoacetyl-ACP synthase and acetyl transacylase activities. Its substrate specificity determines the biosynthesis of branched-chain and/or straight-chain of fatty acids. This Rickettsia bellii (strain OSU 85-389) protein is Beta-ketoacyl-[acyl-carrier-protein] synthase III.